The sequence spans 122 residues: Large ribosomal subunit protein uL14 (122 aa).

Belongs to the universal ribosomal protein uL14 family. In terms of assembly, part of the 50S ribosomal subunit. Forms a cluster with proteins L3 and L19. In the 70S ribosome, L14 and L19 interact and together make contacts with the 16S rRNA in bridges B5 and B8.

Binds to 23S rRNA. Forms part of two intersubunit bridges in the 70S ribosome. This is Large ribosomal subunit protein uL14 from Syntrophotalea carbinolica (strain DSM 2380 / NBRC 103641 / GraBd1) (Pelobacter carbinolicus).